The primary structure comprises 677 residues: L-type lectin-domain containing receptor kinase IV.2 (677 aa).

The first 22 residues, 1–22 (MFVKLKLIFFFFLLCQIMISSS), serve as a signal peptide directing secretion. Over 23–291 (QNLNFTYNGF…EPRRISEFYK (269 aa)) the chain is Extracellular. The legume-lectin like stretch occupies residues 24–262 (NLNFTYNGFH…EHFLVGWSFR (239 aa)). N-linked (GlcNAc...) asparagine glycosylation is found at Asn-26, Asn-57, Asn-81, Asn-128, Asn-134, Asn-171, Asn-186, and Asn-203. The helical transmembrane segment at 292 to 312 (IGMPLISLSLIFSIIFLAFYI) threads the bilayer. Residues 313 to 677 (VRRKKKYEEE…IADSLLSGGR (365 aa)) lie on the Cytoplasmic side of the membrane. In terms of domain architecture, Protein kinase spans 347-625 (FKEKDLLGSG…LQYLRGDMAL (279 aa)). ATP-binding positions include 353–361 (LGSGGFGRV) and Lys-376. Asp-472 acts as the Proton acceptor in catalysis.

The protein in the C-terminal section; belongs to the protein kinase superfamily. Ser/Thr protein kinase family. It in the N-terminal section; belongs to the leguminous lectin family.

It is found in the cell membrane. It catalyses the reaction L-seryl-[protein] + ATP = O-phospho-L-seryl-[protein] + ADP + H(+). It carries out the reaction L-threonyl-[protein] + ATP = O-phospho-L-threonyl-[protein] + ADP + H(+). Its function is as follows. Required during pollen development. Functionally, involved in resistance response to the pathogenic bacteria Pseudomonas syringae. In Arabidopsis thaliana (Mouse-ear cress), this protein is L-type lectin-domain containing receptor kinase IV.2.